The primary structure comprises 81 residues: Small ribosomal subunit protein bS16 (81 aa).

It belongs to the bacterial ribosomal protein bS16 family.

This Desulfotalea psychrophila (strain LSv54 / DSM 12343) protein is Small ribosomal subunit protein bS16.